The primary structure comprises 72 residues: Large ribosomal subunit protein bL28 (72 aa).

It belongs to the bacterial ribosomal protein bL28 family.

This chain is Large ribosomal subunit protein bL28, found in Chlorobium phaeobacteroides (strain BS1).